The following is a 271-amino-acid chain: Isoprenyl transferase (271 aa).

The active site involves Asp35. Asp35 lines the Mg(2+) pocket. Substrate-binding positions include 36 to 39, Trp40, Arg48, His52, and 80 to 82; these read GNGR and STE. The active-site Proton acceptor is Asn83. Substrate-binding positions include Trp84, Arg86, Arg207, and 213–215; that span reads RIS. Glu226 contributes to the Mg(2+) binding site.

The protein belongs to the UPP synthase family. In terms of assembly, homodimer. The cofactor is Mg(2+).

In terms of biological role, catalyzes the condensation of isopentenyl diphosphate (IPP) with allylic pyrophosphates generating different type of terpenoids. The polypeptide is Isoprenyl transferase (Enterococcus faecalis (strain ATCC 700802 / V583)).